Here is a 536-residue protein sequence, read N- to C-terminus: Glutamyl-tRNA(Gln) amidotransferase subunit B, mitochondrial (536 aa).

The protein belongs to the GatB/GatE family. GatB subfamily. Subunit of the heterotrimeric GatFAB amidotransferase (AdT) complex, composed of A, B and F subunits.

The protein resides in the mitochondrion. It catalyses the reaction L-glutamyl-tRNA(Gln) + L-glutamine + ATP + H2O = L-glutaminyl-tRNA(Gln) + L-glutamate + ADP + phosphate + H(+). Its function is as follows. Allows the formation of correctly charged Gln-tRNA(Gln) through the transamidation of misacylated Glu-tRNA(Gln) in the mitochondria. The reaction takes place in the presence of glutamine and ATP through an activated gamma-phospho-Glu-tRNA(Gln). This is Glutamyl-tRNA(Gln) amidotransferase subunit B, mitochondrial from Vanderwaltozyma polyspora (strain ATCC 22028 / DSM 70294 / BCRC 21397 / CBS 2163 / NBRC 10782 / NRRL Y-8283 / UCD 57-17) (Kluyveromyces polysporus).